The chain runs to 397 residues: Tryptophan synthase beta chain 1 (397 aa).

Lys-94 is modified (N6-(pyridoxal phosphate)lysine).

It belongs to the TrpB family. In terms of assembly, tetramer of two alpha and two beta chains. Pyridoxal 5'-phosphate is required as a cofactor.

The catalysed reaction is (1S,2R)-1-C-(indol-3-yl)glycerol 3-phosphate + L-serine = D-glyceraldehyde 3-phosphate + L-tryptophan + H2O. It participates in amino-acid biosynthesis; L-tryptophan biosynthesis; L-tryptophan from chorismate: step 5/5. Its function is as follows. The beta subunit is responsible for the synthesis of L-tryptophan from indole and L-serine. The polypeptide is Tryptophan synthase beta chain 1 (trpB1) (Archaeoglobus fulgidus (strain ATCC 49558 / DSM 4304 / JCM 9628 / NBRC 100126 / VC-16)).